Reading from the N-terminus, the 165-residue chain is RNA pyrophosphohydrolase (165 aa).

Residues 6-149 (GYRPNVGIII…KQSVYHQALT (144 aa)) enclose the Nudix hydrolase domain. Positions 38 to 59 (GGVRENETPQQAVFRELKEEVG) match the Nudix box motif.

This sequence belongs to the Nudix hydrolase family. RppH subfamily. Requires a divalent metal cation as cofactor.

In terms of biological role, accelerates the degradation of transcripts by removing pyrophosphate from the 5'-end of triphosphorylated RNA, leading to a more labile monophosphorylated state that can stimulate subsequent ribonuclease cleavage. The protein is RNA pyrophosphohydrolase of Hydrogenovibrio crunogenus (strain DSM 25203 / XCL-2) (Thiomicrospira crunogena).